Here is a 627-residue protein sequence, read N- to C-terminus: Carene synthase 2, chloroplastic (627 aa).

Residues 1-36 constitute a chloroplast transit peptide; the sequence is MSVISIVPLASKSCLYKSLMSSTHELKALCRPIVTL. Mg(2+)-binding residues include aspartate 378, aspartate 382, and aspartate 530. Positions 378-382 match the DDXXD motif motif; that stretch reads DDMYD.

This sequence belongs to the terpene synthase family. Tpsd subfamily. Mg(2+) serves as cofactor. The cofactor is Mn(2+).

Its subcellular location is the plastid. It is found in the chloroplast. It catalyses the reaction (2E)-geranyl diphosphate = (+)-car-3-ene + diphosphate. Its pathway is terpene metabolism; oleoresin biosynthesis. In terms of biological role, terpene synthase (TPS) involved in defensive oleoresin formation in conifers in response to insect attack (e.g. white pine weevil P.strobi) or other injury. The sequence is that of Carene synthase 2, chloroplastic (TPS-3car2) from Picea sitchensis (Sitka spruce).